The sequence spans 230 residues: 7-cyano-7-deazaguanine synthase (230 aa).

An ATP-binding site is contributed by 9-19; that stretch reads YSGGLDSTTCL. Cys190, Cys200, Cys203, and Cys206 together coordinate Zn(2+).

Belongs to the QueC family. Zn(2+) is required as a cofactor.

The enzyme catalyses 7-carboxy-7-deazaguanine + NH4(+) + ATP = 7-cyano-7-deazaguanine + ADP + phosphate + H2O + H(+). It functions in the pathway purine metabolism; 7-cyano-7-deazaguanine biosynthesis. Its function is as follows. Catalyzes the ATP-dependent conversion of 7-carboxy-7-deazaguanine (CDG) to 7-cyano-7-deazaguanine (preQ(0)). The protein is 7-cyano-7-deazaguanine synthase of Syntrophotalea carbinolica (strain DSM 2380 / NBRC 103641 / GraBd1) (Pelobacter carbinolicus).